The chain runs to 527 residues: Putative WEB family protein At4g17210 (527 aa).

Disordered regions lie at residues Met-1–Arg-28 and Phe-46–Ser-70. The span at Ser-55–Asp-68 shows a compositional bias: low complexity. 3 coiled-coil regions span residues Ala-95–Ile-159, Ser-202–Met-389, and Lys-436–Ser-513.

It belongs to the WEB family.

The sequence is that of Putative WEB family protein At4g17210 from Arabidopsis thaliana (Mouse-ear cress).